Reading from the N-terminus, the 456-residue chain is Proline-specific permease ProY (456 aa).

At Met1–Arg17 the chain is on the cytoplasmic side. 2 helical membrane-spanning segments follow: residues Phe18–Lys38 and Met39–Met59. Over Arg60–Tyr95 the chain is Cytoplasmic. The next 2 helical transmembrane spans lie at Cys96–Val116 and Trp117–Ile137. Residues Asn138–Lys156 lie on the Cytoplasmic side of the membrane. The chain crosses the membrane as a helical span at residues Val157–Asn177. The Periplasmic segment spans residues Gly178–Gly197. Residues Trp198–Ile218 traverse the membrane as a helical segment. Topologically, residues Gly219–Arg242 are cytoplasmic. A helical transmembrane segment spans residues Ile243–Val263. The Periplasmic segment spans residues Gly264 to Met277. The chain crosses the membrane as a helical span at residues Gly278–Ile298. Residues Asn299 to Pro331 lie on the Cytoplasmic side of the membrane. Residues Trp332 to Met352 traverse the membrane as a helical segment. Residues Pro353–Asn355 are Periplasmic-facing. A helical membrane pass occupies residues Val356 to Leu376. The Cytoplasmic segment spans residues Leu377 to Pro399. Residues Gly400–Gly420 traverse the membrane as a helical segment. The Periplasmic segment spans residues Tyr421–Asp424. Residues Thr425–Phe445 form a helical membrane-spanning segment. Residues Lys446 to Ala456 lie on the Cytoplasmic side of the membrane.

This sequence belongs to the amino acid-polyamine-organocation (APC) superfamily. Amino acid transporter (AAT) (TC 2.A.3.1) family.

The protein localises to the cell inner membrane. Functionally, permease that is involved in the transport across the cytoplasmic membrane of proline. The chain is Proline-specific permease ProY (proY) from Salmonella typhimurium (strain LT2 / SGSC1412 / ATCC 700720).